The chain runs to 1114 residues: Translation initiation factor IF-2 (1114 aa).

Disordered regions lie at residues 69–102 and 181–507; these read SIKK…PLLI and INNN…KRRA. Residues 85–96 show a composition bias toward basic and acidic residues; that stretch reads SKKETPLKDNSN. Residues 181–198 are compositionally biased toward polar residues; the sequence is INNNVKSNESSQNISSAG. Over residues 240 to 251 the composition is skewed to low complexity; the sequence is INPNKQNNKQNI. The span at 252-261 shows a compositional bias: polar residues; it reads AFKQTGSNRI. Low complexity-rich tracts occupy residues 262–278, 290–309, and 321–337; these read GSPN…GLRN, NRQG…GLRN, and NRQG…NRPG. A compositionally biased stretch (basic and acidic residues) spans 365-375; the sequence is NSEKDNKDKNN. A compositionally biased stretch (low complexity) spans 376 to 385; the sequence is NAKQNINGPN. The span at 417–431 shows a compositional bias: basic and acidic residues; it reads GKTDWDDSAKLEALR. Residues 489–505 show a composition bias toward basic residues; the sequence is KQFKKKKKETTRQRQKR. The 173-residue stretch at 606-778 folds into the tr-type G domain; sequence RRPPVITVMG…ILLVSEVEDL (173 aa). Positions 615–622 are G1; that stretch reads GHVDHGKT. 615 to 622 is a binding site for GTP; the sequence is GHVDHGKT. A G2 region spans residues 640–644; that stretch reads GITQH. Residues 665–668 form a G3 region; it reads DTPG. GTP-binding positions include 665-669 and 719-722; these read DTPGH and NKID. The G4 stretch occupies residues 719–722; that stretch reads NKID. The G5 stretch occupies residues 755–757; that stretch reads SAI.

Belongs to the TRAFAC class translation factor GTPase superfamily. Classic translation factor GTPase family. IF-2 subfamily.

The protein localises to the cytoplasm. In terms of biological role, one of the essential components for the initiation of protein synthesis. Protects formylmethionyl-tRNA from spontaneous hydrolysis and promotes its binding to the 30S ribosomal subunits. Also involved in the hydrolysis of GTP during the formation of the 70S ribosomal complex. The polypeptide is Translation initiation factor IF-2 (Prochlorococcus marinus (strain MIT 9301)).